The chain runs to 371 residues: Queuine tRNA-ribosyltransferase (371 aa).

The active-site Proton acceptor is the Asp-89. Substrate-binding positions include 89–93 (DSGGF), Asp-143, Gln-185, and Gly-212. The interval 243-249 (GVGKPED) is RNA binding. Residue Asp-262 is the Nucleophile of the active site. The tract at residues 267–271 (TRNAR) is RNA binding; important for wobble base 34 recognition. Cys-300, Cys-302, Cys-305, and His-331 together coordinate Zn(2+).

This sequence belongs to the queuine tRNA-ribosyltransferase family. In terms of assembly, homodimer. Within each dimer, one monomer is responsible for RNA recognition and catalysis, while the other monomer binds to the replacement base PreQ1. Requires Zn(2+) as cofactor.

It catalyses the reaction 7-aminomethyl-7-carbaguanine + guanosine(34) in tRNA = 7-aminomethyl-7-carbaguanosine(34) in tRNA + guanine. Its pathway is tRNA modification; tRNA-queuosine biosynthesis. Functionally, catalyzes the base-exchange of a guanine (G) residue with the queuine precursor 7-aminomethyl-7-deazaguanine (PreQ1) at position 34 (anticodon wobble position) in tRNAs with GU(N) anticodons (tRNA-Asp, -Asn, -His and -Tyr). Catalysis occurs through a double-displacement mechanism. The nucleophile active site attacks the C1' of nucleotide 34 to detach the guanine base from the RNA, forming a covalent enzyme-RNA intermediate. The proton acceptor active site deprotonates the incoming PreQ1, allowing a nucleophilic attack on the C1' of the ribose to form the product. After dissociation, two additional enzymatic reactions on the tRNA convert PreQ1 to queuine (Q), resulting in the hypermodified nucleoside queuosine (7-(((4,5-cis-dihydroxy-2-cyclopenten-1-yl)amino)methyl)-7-deazaguanosine). This Thioalkalivibrio sulfidiphilus (strain HL-EbGR7) protein is Queuine tRNA-ribosyltransferase.